The following is a 213-amino-acid chain: Large ribosomal subunit protein uL3 (213 aa).

Belongs to the universal ribosomal protein uL3 family. In terms of assembly, part of the 50S ribosomal subunit. Forms a cluster with proteins L14 and L19.

One of the primary rRNA binding proteins, it binds directly near the 3'-end of the 23S rRNA, where it nucleates assembly of the 50S subunit. In Bifidobacterium longum (strain DJO10A), this protein is Large ribosomal subunit protein uL3.